We begin with the raw amino-acid sequence, 140 residues long: Nucleoside diphosphate kinase (140 aa).

ATP is bound by residues K11, F59, R87, T93, R104, and N114. H117 serves as the catalytic Pros-phosphohistidine intermediate.

This sequence belongs to the NDK family. As to quaternary structure, homotetramer. Mg(2+) is required as a cofactor.

It localises to the cytoplasm. It carries out the reaction a 2'-deoxyribonucleoside 5'-diphosphate + ATP = a 2'-deoxyribonucleoside 5'-triphosphate + ADP. The enzyme catalyses a ribonucleoside 5'-diphosphate + ATP = a ribonucleoside 5'-triphosphate + ADP. Major role in the synthesis of nucleoside triphosphates other than ATP. The ATP gamma phosphate is transferred to the NDP beta phosphate via a ping-pong mechanism, using a phosphorylated active-site intermediate. The polypeptide is Nucleoside diphosphate kinase (Brucella melitensis biotype 1 (strain ATCC 23456 / CCUG 17765 / NCTC 10094 / 16M)).